The following is a 164-amino-acid chain: Crossover junction endodeoxyribonuclease RuvC (164 aa).

Catalysis depends on residues aspartate 7, glutamate 67, and aspartate 140. Residues aspartate 7, glutamate 67, and aspartate 140 each contribute to the Mg(2+) site.

This sequence belongs to the RuvC family. As to quaternary structure, homodimer which binds Holliday junction (HJ) DNA. The HJ becomes 2-fold symmetrical on binding to RuvC with unstacked arms; it has a different conformation from HJ DNA in complex with RuvA. In the full resolvosome a probable DNA-RuvA(4)-RuvB(12)-RuvC(2) complex forms which resolves the HJ. It depends on Mg(2+) as a cofactor.

The protein resides in the cytoplasm. It catalyses the reaction Endonucleolytic cleavage at a junction such as a reciprocal single-stranded crossover between two homologous DNA duplexes (Holliday junction).. Functionally, the RuvA-RuvB-RuvC complex processes Holliday junction (HJ) DNA during genetic recombination and DNA repair. Endonuclease that resolves HJ intermediates. Cleaves cruciform DNA by making single-stranded nicks across the HJ at symmetrical positions within the homologous arms, yielding a 5'-phosphate and a 3'-hydroxyl group; requires a central core of homology in the junction. The consensus cleavage sequence is 5'-(A/T)TT(C/G)-3'. Cleavage occurs on the 3'-side of the TT dinucleotide at the point of strand exchange. HJ branch migration catalyzed by RuvA-RuvB allows RuvC to scan DNA until it finds its consensus sequence, where it cleaves and resolves the cruciform DNA. The polypeptide is Crossover junction endodeoxyribonuclease RuvC (Finegoldia magna (strain ATCC 29328 / DSM 20472 / WAL 2508) (Peptostreptococcus magnus)).